The sequence spans 307 residues: Probable E3 SUMO-protein ligase RNF212 (307 aa).

The RING-type zinc finger occupies 7–46 (CNRCFQSPHRKSSFSLTSCGHVYCHSCLLKGTKNECVICQ). A coiled-coil region spans residues 91–124 (RRRLVAFYQEKISQLEESLRKSVLQIKQLQSMRS). Residues 164–291 (LTPPARKPEM…KMSPFLPSTP (128 aa)) are disordered. Composition is skewed to polar residues over residues 202–213 (LSLTPSHASMTK), 233–252 (SQLS…SSWT), and 259–271 (ISIS…QCAG).

In terms of tissue distribution, specifically expressed in meiocytes of the gonads.

The protein localises to the nucleus. The protein resides in the chromosome. It functions in the pathway protein modification; protein sumoylation. Its function is as follows. SUMO E3 ligase that acts as a regulator of crossing-over during meiosis: required to couple chromosome synapsis to the formation of crossover-specific recombination complexes. Localizes to recombination sites and stabilizes meiosis-specific recombination factors, such as MutS-gamma complex proteins (MSH4 and MSH5) and TEX11. May mediate sumoylation of target proteins MSH4 and/or MSH5, leading to enhance their binding to recombination sites. Acts as a limiting factor for crossover designation and/or reinforcement and plays an antagonist role with CCNB1IP1/HEI10 in the regulation of meiotic recombination. The sequence is that of Probable E3 SUMO-protein ligase RNF212 (Rnf212) from Mus musculus (Mouse).